We begin with the raw amino-acid sequence, 181 residues long: Thioredoxin M-type, chloroplastic (181 aa).

The N-terminal 67 residues, 1 to 67, are a transit peptide targeting the chloroplast; it reads MAIENCLQLS…RQFRYSSVVC (67 aa). The region spanning 68-180 is the Thioredoxin domain; the sequence is KASEAVKEVQ…LTDSIEKYLS (113 aa). Catalysis depends on nucleophile residues cysteine 104 and cysteine 107. Residues cysteine 104 and cysteine 107 are joined by a disulfide bond.

This sequence belongs to the thioredoxin family. Plant M-type subfamily. As to quaternary structure, forms a complex with heterodimeric ferredoxin-thioredoxin reductase (FTR) and ferredoxin.

The protein localises to the plastid. The protein resides in the chloroplast. Participates in various redox reactions through the reversible oxidation of the active center dithiol to a disulfide. The M form is known to activate NADP-malate dehydrogenase. In Spinacia oleracea (Spinach), this protein is Thioredoxin M-type, chloroplastic.